We begin with the raw amino-acid sequence, 207 residues long: Pyridoxal 5'-phosphate synthase subunit PdxT (207 aa).

Position 53-55 (Gly-53–Ser-55) interacts with L-glutamine. Catalysis depends on Cys-85, which acts as the Nucleophile. L-glutamine-binding positions include Arg-114 and Ile-143–Arg-144. Catalysis depends on charge relay system residues His-184 and Glu-186.

This sequence belongs to the glutaminase PdxT/SNO family. In terms of assembly, in the presence of PdxS, forms a dodecamer of heterodimers. Only shows activity in the heterodimer.

It catalyses the reaction aldehydo-D-ribose 5-phosphate + D-glyceraldehyde 3-phosphate + L-glutamine = pyridoxal 5'-phosphate + L-glutamate + phosphate + 3 H2O + H(+). It carries out the reaction L-glutamine + H2O = L-glutamate + NH4(+). Its pathway is cofactor biosynthesis; pyridoxal 5'-phosphate biosynthesis. Its function is as follows. Catalyzes the hydrolysis of glutamine to glutamate and ammonia as part of the biosynthesis of pyridoxal 5'-phosphate. The resulting ammonia molecule is channeled to the active site of PdxS. The chain is Pyridoxal 5'-phosphate synthase subunit PdxT from Acidothermus cellulolyticus (strain ATCC 43068 / DSM 8971 / 11B).